The following is a 241-amino-acid chain: Proteasome subunit alpha (241 aa).

This sequence belongs to the peptidase T1A family. The 20S proteasome core is composed of 14 alpha and 14 beta subunits that assemble into four stacked heptameric rings, resulting in a barrel-shaped structure. The two inner rings, each composed of seven catalytic beta subunits, are sandwiched by two outer rings, each composed of seven alpha subunits. The catalytic chamber with the active sites is on the inside of the barrel. Has a gated structure, the ends of the cylinder being occluded by the N-termini of the alpha-subunits. Is capped at one or both ends by the proteasome regulatory ATPase, PAN.

It is found in the cytoplasm. Its activity is regulated as follows. The formation of the proteasomal ATPase PAN-20S proteasome complex, via the docking of the C-termini of PAN into the intersubunit pockets in the alpha-rings, triggers opening of the gate for substrate entry. Interconversion between the open-gate and close-gate conformations leads to a dynamic regulation of the 20S proteasome proteolysis activity. Functionally, component of the proteasome core, a large protease complex with broad specificity involved in protein degradation. This is Proteasome subunit alpha from Saccharolobus solfataricus (strain ATCC 35092 / DSM 1617 / JCM 11322 / P2) (Sulfolobus solfataricus).